An 83-amino-acid chain; its full sequence is Neurotoxin LmNaTx34.5 (83 aa).

A signal peptide spans 1 to 15; the sequence is FILVVIALMVIEVKS. The LCN-type CS-alpha/beta domain maps to 16 to 82; sequence DGYLMVRAGR…IWTYEKNTCS (67 aa). Intrachain disulfides connect Cys-29–Cys-81, Cys-33–Cys-54, Cys-40–Cys-61, and Cys-44–Cys-63.

Belongs to the long (4 C-C) scorpion toxin superfamily. Sodium channel inhibitor family. Beta subfamily. In terms of tissue distribution, expressed by the venom gland.

It is found in the secreted. Functionally, binds voltage-independently at site-4 of sodium channels (Nav) and shift the voltage of activation toward more negative potentials thereby affecting sodium channel activation and promoting spontaneous and repetitive firing. The protein is Neurotoxin LmNaTx34.5 of Lychas mucronatus (Chinese swimming scorpion).